A 473-amino-acid chain; its full sequence is Phenolic acid decarboxylase (473 aa).

Residues Asn-160, His-182, and Glu-224 each coordinate Mn(2+). Prenylated FMN contacts are provided by residues 160–165 (NVGIYR) and 181–182 (QH). Glu-273 serves as the catalytic Proton donor.

This sequence belongs to the UbiD family. YclC subfamily. Requires prenylated FMN as cofactor. Mn(2+) is required as a cofactor.

The catalysed reaction is 4-hydroxybenzoate + H(+) = phenol + CO2. It catalyses the reaction vanillate + H(+) = guaiacol + CO2. In terms of biological role, involved in the non-oxidative decarboxylation and detoxification of phenolic derivatives under both aerobic and anaerobic conditions. Phenolic acid decarboxylase that catalyzes the reversible decarboxylation of 4-hydroxybenzoate and vanillate. Could also catalyze the decarboxylation of salicylate. Is not active on di- and tri-hydroxybenzoate derivatives. The sequence is that of Phenolic acid decarboxylase from Bacillus subtilis (strain 168).